A 175-amino-acid polypeptide reads, in one-letter code: MRLSVCAAISHGRVFRRMGLGPESRIHLLRNLLTGLVRHERIEAPWARVDEMRGYAEKLIDYGKLGDTNERAMRMADFWLTEKDLIPKLFQVLAPRYKDQNGGYTRMRQIPNRSLDRAKMAVIEYKGNCLPPLPLPRRDSHLTLLNQLLQGLRQDLSQSQEASNHSSHTAQTPGI.

The transit peptide at 1 to 8 directs the protein to the mitochondrion; that stretch reads MRLSVCAA. Positions 155-175 are disordered; that stretch reads DLSQSQEASNHSSHTAQTPGI. The span at 157 to 175 shows a compositional bias: polar residues; it reads SQSQEASNHSSHTAQTPGI.

This sequence belongs to the bacterial ribosomal protein bL17 family. In terms of assembly, component of the mitochondrial ribosome large subunit (39S) which comprises a 16S rRNA and about 50 distinct proteins.

It is found in the mitochondrion. The sequence is that of Large ribosomal subunit protein bL17m (MRPL17) from Pongo abelii (Sumatran orangutan).